Reading from the N-terminus, the 447-residue chain is Phosphoglucosamine mutase (447 aa).

The active-site Phosphoserine intermediate is S100. Residues S100, D240, D242, and D244 each contribute to the Mg(2+) site. S100 is modified (phosphoserine).

It belongs to the phosphohexose mutase family. It depends on Mg(2+) as a cofactor. Activated by phosphorylation.

It catalyses the reaction alpha-D-glucosamine 1-phosphate = D-glucosamine 6-phosphate. In terms of biological role, catalyzes the conversion of glucosamine-6-phosphate to glucosamine-1-phosphate. The sequence is that of Phosphoglucosamine mutase from Clostridium botulinum (strain Eklund 17B / Type B).